The sequence spans 427 residues: Adenylosuccinate synthetase (427 aa).

Residues 12–18 (GDEGKGK) and 40–42 (GHT) contribute to the GTP site. Asp13 (proton acceptor) is an active-site residue. Mg(2+)-binding residues include Asp13 and Gly40. IMP-binding positions include 13–16 (DEGK), 38–41 (NAGH), Thr130, Arg144, Gln224, Thr239, and Arg303. Residue His41 is the Proton donor of the active site. Position 299 to 305 (299 to 305 (SVTGRPR)) interacts with substrate. Residues Arg305, 331-333 (KLD), and 411-413 (SVG) contribute to the GTP site.

It belongs to the adenylosuccinate synthetase family. In terms of assembly, homodimer. Mg(2+) is required as a cofactor.

The protein localises to the cytoplasm. It carries out the reaction IMP + L-aspartate + GTP = N(6)-(1,2-dicarboxyethyl)-AMP + GDP + phosphate + 2 H(+). The protein operates within purine metabolism; AMP biosynthesis via de novo pathway; AMP from IMP: step 1/2. Plays an important role in the de novo pathway of purine nucleotide biosynthesis. Catalyzes the first committed step in the biosynthesis of AMP from IMP. In Sorangium cellulosum (strain So ce56) (Polyangium cellulosum (strain So ce56)), this protein is Adenylosuccinate synthetase.